Here is a 164-residue protein sequence, read N- to C-terminus: UBA-like domain-containing protein 2 (164 aa).

Residue Ser2 is modified to N-acetylserine. Residues Pro144–Arg164 are disordered.

This sequence belongs to the UBALD family.

This is UBA-like domain-containing protein 2 (Ubald2) from Mus musculus (Mouse).